The chain runs to 225 residues: Uracil-DNA glycosylase (225 aa).

The active-site Proton acceptor is aspartate 64.

This sequence belongs to the uracil-DNA glycosylase (UDG) superfamily. UNG family.

Its subcellular location is the cytoplasm. It catalyses the reaction Hydrolyzes single-stranded DNA or mismatched double-stranded DNA and polynucleotides, releasing free uracil.. In terms of biological role, excises uracil residues from the DNA which can arise as a result of misincorporation of dUMP residues by DNA polymerase or due to deamination of cytosine. The protein is Uracil-DNA glycosylase of Agathobacter rectalis (strain ATCC 33656 / DSM 3377 / JCM 17463 / KCTC 5835 / VPI 0990) (Eubacterium rectale).